The primary structure comprises 553 residues: ATP synthase F(1) complex subunit alpha, mitochondrial (553 aa).

Residues 1–43 (MLSVRVAAAVARALPRRAGLVSKNALGSSFVAARNLHASNTRL) constitute a mitochondrion transit peptide. Serine 53 and serine 65 each carry phosphoserine. Serine 76 bears the Phosphoserine; alternate mark. Serine 76 carries an O-linked (GlcNAc) serine; alternate glycan. Serine 106 is subject to Phosphoserine. N6-acetyllysine occurs at positions 123, 126, and 132. At threonine 134 the chain carries Phosphothreonine. An N6-acetyllysine; alternate modification is found at lysine 161. At lysine 161 the chain carries N6-succinyllysine; alternate. Serine 166 carries the post-translational modification Phosphoserine. An N6-acetyllysine; alternate modification is found at lysine 167. Lysine 167 bears the N6-succinyllysine; alternate mark. The residue at position 184 (serine 184) is a Phosphoserine. Arginine 204 carries the omega-N-methylarginine modification. ATP-binding residues include glutamine 215, glycine 217, lysine 218, threonine 219, and serine 220. Position 219 (threonine 219) interacts with Mg(2+). An N6-acetyllysine; alternate mark is found at lysine 230 and lysine 239. An N6-succinyllysine; alternate mark is found at lysine 230 and lysine 239. An N6-acetyllysine modification is found at lysine 240. An N6-acetyllysine; alternate mark is found at lysine 261 and lysine 305. N6-succinyllysine; alternate occurs at positions 261 and 305. Residue aspartate 312 coordinates Mg(2+). Residue lysine 427 is modified to N6-acetyllysine; alternate. Lysine 427 is subject to N6-succinyllysine; alternate. Lysine 434 carries the post-translational modification N6-acetyllysine. The ATP site is built by glutamine 473 and glutamine 475. 4 positions are modified to N6-acetyllysine; alternate: lysine 498, lysine 506, lysine 531, and lysine 539. An N6-succinyllysine; alternate mark is found at lysine 498, lysine 506, lysine 531, and lysine 539. Lysine 541 is modified (N6-acetyllysine).

Belongs to the ATPase alpha/beta chains family. In terms of assembly, homotrimer. Component of the ATP synthase complex composed at least of ATP5F1A/subunit alpha, ATP5F1B/subunit beta, ATP5MC1/subunit c (homooctomer), MT-ATP6/subunit a, MT-ATP8/subunit 8, ATP5ME/subunit e, ATP5MF/subunit f, ATP5MG/subunit g, ATP5MK/subunit k, ATP5MJ/subunit j, ATP5F1C/subunit gamma, ATP5F1D/subunit delta, ATP5F1E/subunit epsilon, ATP5PF/subunit F6, ATP5PB/subunit b, ATP5PD/subunit d, ATP5PO/subunit OSCP. ATP synthase complex consists of a soluble F(1) head domain (subunits alpha(3) and beta(3)) - the catalytic core - and a membrane F(0) domain - the membrane proton channel (subunits c, a, 8, e, f, g, k and j). These two domains are linked by a central stalk (subunits gamma, delta, and epsilon) rotating inside the F1 region and a stationary peripheral stalk (subunits F6, b, d, and OSCP). Interacts with ATPAF2. Interacts with HRG; the interaction occurs on the surface of T-cells and alters the cell morphology when associated with concanavalin (in vitro). Interacts with PLG (angiostatin peptide); the interaction inhibits most of the angiogenic properties of angiostatin. Interacts with BLOC1S1. Interacts with BCL2L1 isoform BCL-X(L); the interaction mediates the association of BCL2L1 isoform BCL-X(L) with the mitochondrial membrane F(1)F(0) ATP synthase and enhances neurons metabolic efficiency. Interacts with CLN5 and PPT1. Interacts with S100A1; this interaction increases F1-ATPase activity. Interacts with ABCB7; this interaction allows the regulation of cellular iron homeostasis and cellular reactive oxygen species (ROS) levels in cardiomyocytes. Acetylated on lysine residues. BLOC1S1 is required for acetylation. As to expression, expressed in heart (at protein level).

It is found in the mitochondrion. The protein resides in the mitochondrion inner membrane. Its subcellular location is the cell membrane. Subunit alpha, of the mitochondrial membrane ATP synthase complex (F(1)F(0) ATP synthase or Complex V) that produces ATP from ADP in the presence of a proton gradient across the membrane which is generated by electron transport complexes of the respiratory chain. ATP synthase complex consist of a soluble F(1) head domain - the catalytic core - and a membrane F(1) domain - the membrane proton channel. These two domains are linked by a central stalk rotating inside the F(1) region and a stationary peripheral stalk. During catalysis, ATP synthesis in the catalytic domain of F(1) is coupled via a rotary mechanism of the central stalk subunits to proton translocation. In vivo, can only synthesize ATP although its ATP hydrolase activity can be activated artificially in vitro. With the catalytic subunit beta (ATP5F1B), forms the catalytic core in the F(1) domain. Subunit alpha does not bear the catalytic high-affinity ATP-binding sites. The polypeptide is ATP synthase F(1) complex subunit alpha, mitochondrial (Sus scrofa (Pig)).